Consider the following 419-residue polypeptide: Inositol-tetrakisphosphate 1-kinase (419 aa).

Lys18 lines the 1D-myo-inositol 1,3,4-trisphosphate pocket. 2 residues coordinate ATP: Arg106 and Lys157. One can recognise an ATP-grasp domain in the interval 117-325 (EAYMKDDRIC…IASVLQGQSS (209 aa)). 1D-myo-inositol 1,3,4-trisphosphate-binding residues include His167 and Lys199. ATP-binding positions include 188–199 (QNFINHNAVLYK), Ser214, Ser232, and Ser236. Positions 281, 295, and 297 each coordinate Mg(2+). A 1D-myo-inositol 1,3,4-trisphosphate-binding site is contributed by Asn297. At Lys388 the chain carries N6-acetyllysine; by EP300 and CREBBP. Ser401 carries the phosphoserine modification. Residue Lys415 is modified to N6-acetyllysine; by EP300 and CREBBP.

Belongs to the ITPK1 family. In terms of assembly, monomer. Interacts with GPS1/COPS1. Mg(2+) is required as a cofactor. In terms of processing, acetylation by EP300 and CREBBP destabilizes ITPK1, and down-regulates enzymatic activity. Deacetylated by SIRT1.

The enzyme catalyses 1D-myo-inositol 3,4,5,6-tetrakisphosphate + ATP = 1D-myo-inositol 1,3,4,5,6-pentakisphosphate + ADP + H(+). It catalyses the reaction 1D-myo-inositol 1,3,4-trisphosphate + ATP = 1D-myo-inositol 1,3,4,5-tetrakisphosphate + ADP + H(+). It carries out the reaction 1D-myo-inositol 1,3,4-trisphosphate + ATP = 1D-myo-inositol 1,3,4,6-tetrakisphosphate + ADP + H(+). The catalysed reaction is 1D-myo-inositol 3,4,6-trisphosphate + ATP = 1D-myo-inositol 1,3,4,6-tetrakisphosphate + ADP + H(+). The enzyme catalyses 1D-myo-inositol 1,3,4-trisphosphate + 1D-myo-inositol 1,3,4,5,6-pentakisphosphate = 1D-myo-inositol 3,4,5,6-tetrakisphosphate + 1D-myo-inositol 1,3,4,6-tetrakisphosphate. It catalyses the reaction 1D-myo-inositol 1,3,4-trisphosphate + 1D-myo-inositol 1,3,4,5,6-pentakisphosphate = 1D-myo-inositol 3,4,5,6-tetrakisphosphate + 1D-myo-inositol 1,3,4,5-tetrakisphosphate. In terms of biological role, kinase that can phosphorylate various inositol polyphosphate such as Ins(3,4,5,6)P4 or Ins(1,3,4)P3. Phosphorylates Ins(3,4,5,6)P4 at position 1 to form Ins(1,3,4,5,6)P5. This reaction is thought to have regulatory importance, since Ins(3,4,5,6)P4 is an inhibitor of plasma membrane Ca(2+)-activated Cl(-) channels, while Ins(1,3,4,5,6)P5 is not. Also phosphorylates Ins(1,3,4)P3 on O-5 and O-6 to form Ins(1,3,4,6)P4, an essential molecule in the hexakisphosphate (InsP6) pathway. Also acts as an inositol polyphosphate phosphatase that dephosphorylates Ins(1,3,4,5)P4 and Ins(1,3,4,6)P4 to Ins(1,3,4)P3, and Ins(1,3,4,5,6)P5 to Ins(3,4,5,6)P4. May also act as an isomerase that interconverts the inositol tetrakisphosphate isomers Ins(1,3,4,5)P4 and Ins(1,3,4,6)P4 in the presence of ADP and magnesium. Probably acts as the rate-limiting enzyme of the InsP6 pathway. Modifies TNF-alpha-induced apoptosis by interfering with the activation of TNFRSF1A-associated death domain. Plays an important role in MLKL-mediated necroptosis. Produces highly phosphorylated inositol phosphates such as inositolhexakisphosphate (InsP6) which bind to MLKL mediating the release of an N-terminal auto-inhibitory region leading to its activation. Essential for activated phospho-MLKL to oligomerize and localize to the cell membrane during necroptosis. In Bos taurus (Bovine), this protein is Inositol-tetrakisphosphate 1-kinase (ITPK1).